Reading from the N-terminus, the 210-residue chain is Proteasome subunit beta (210 aa).

A propeptide spans 1 to 10 (MKELDQLTKG) (removed in mature form; by autocatalysis). The Nucleophile role is filled by Thr-11.

It belongs to the peptidase T1B family. In terms of assembly, the 20S proteasome core is composed of 14 alpha and 14 beta subunits that assemble into four stacked heptameric rings, resulting in a barrel-shaped structure. The two inner rings, each composed of seven catalytic beta subunits, are sandwiched by two outer rings, each composed of seven alpha subunits. The catalytic chamber with the active sites is on the inside of the barrel. Has a gated structure, the ends of the cylinder being occluded by the N-termini of the alpha-subunits. Is capped at one or both ends by the proteasome regulatory ATPase, PAN.

Its subcellular location is the cytoplasm. It catalyses the reaction Cleavage of peptide bonds with very broad specificity.. The formation of the proteasomal ATPase PAN-20S proteasome complex, via the docking of the C-termini of PAN into the intersubunit pockets in the alpha-rings, triggers opening of the gate for substrate entry. Interconversion between the open-gate and close-gate conformations leads to a dynamic regulation of the 20S proteasome proteolysis activity. Functionally, component of the proteasome core, a large protease complex with broad specificity involved in protein degradation. This chain is Proteasome subunit beta, found in Methanopyrus kandleri (strain AV19 / DSM 6324 / JCM 9639 / NBRC 100938).